The sequence spans 319 residues: Olfactory receptor 13F1 (319 aa).

Residues 1-25 lie on the Extracellular side of the membrane; that stretch reads MFPANWTSVKVFFFLGFFHYPKVQV. N-linked (GlcNAc...) asparagine glycosylation is present at asparagine 5. Residues 26–46 form a helical membrane-spanning segment; the sequence is IIFAVCLLMYLITLLGNIFLI. Over 47–54 the chain is Cytoplasmic; that stretch reads SITILDSH. The chain crosses the membrane as a helical span at residues 55-75; the sequence is LHTPMYLFLSNLSFLDIWYSS. Residues 76 to 99 lie on the Extracellular side of the membrane; the sequence is SALSPMLANFVSGRNTISFSGCAT. Cysteine 97 and cysteine 189 form a disulfide bridge. A helical membrane pass occupies residues 100 to 120; the sequence is QMYLSLAMGSTECVLLPMMAY. Residues 121 to 139 are Cytoplasmic-facing; it reads DRYVAICNPLRYPVIMNRR. The helical transmembrane segment at 140 to 160 threads the bilayer; sequence TCVQIAAGSWMTGCLTAMVEM. Over 161–197 the chain is Extracellular; it reads MSVLPLSLCGNSIINHFTCEILAILKLVCVDTSLVQL. A helical transmembrane segment spans residues 198–217; sequence IMLVISVLLLPMPMLLICIS. Residues 218–237 lie on the Cytoplasmic side of the membrane; the sequence is YAFILASILRISSVEGRSKA. A helical membrane pass occupies residues 238–258; the sequence is FSTCTAHLMVVVLFYGTALSM. At 259–271 the chain is on the extracellular side; that stretch reads HLKPSAVDSQEID. A helical membrane pass occupies residues 272–292; the sequence is KFMALVYAGQTPMLNPIIYSL. Topologically, residues 293 to 319 are cytoplasmic; sequence RNKEVKVALKKLLIRNHFNTAFISILK.

It belongs to the G-protein coupled receptor 1 family.

The protein localises to the cell membrane. Its function is as follows. Odorant receptor. The chain is Olfactory receptor 13F1 (OR13F1) from Homo sapiens (Human).